Here is an 846-residue protein sequence, read N- to C-terminus: MAP7 domain-containing protein 1 (846 aa).

2 disordered regions span residues 1–153 (MESG…ERAK) and 186–210 (EQRL…EKNK). Residues 24–41 (EPRPSPEGDPSPPPPPTP) are compositionally biased toward pro residues. Phosphothreonine occurs at positions 49 and 53. Position 95 is a phosphoserine (Ser-95). At Thr-99 the chain carries Phosphothreonine. Residues 113 to 123 (RSSQPSPTTVP) are compositionally biased toward low complexity. Phosphoserine is present on residues Ser-115 and Ser-118. At Thr-120 the chain carries Phosphothreonine. 2 positions are modified to phosphoserine: Ser-125 and Ser-127. The stretch at 130-224 (AKQDVKKAGE…AAIQRSVKKT (95 aa)) forms a coiled coil. Basic and acidic residues predominate over residues 132–153 (QDVKKAGERHKLAKERREERAK). Ser-256, Ser-275, Ser-315, Ser-368, and Ser-401 each carry phosphoserine. The segment at 318-816 (TLPRNGRDQG…KGTAGDKSLG (499 aa)) is disordered. Basic and acidic residues predominate over residues 407–437 (RRLEATPVQKKEKKDKERENEKEKSALARER). Residues 414–443 (VQKKEKKDKERENEKEKSALARERNLKKRQ) adopt a coiled-coil conformation. Phosphoserine occurs at positions 444, 448, 454, and 460. Residues 460–471 (SPKSKARPSSPS) show a composition bias toward low complexity. Residue Lys-462 forms a Glycyl lysine isopeptide (Lys-Gly) (interchain with G-Cter in SUMO2) linkage. Phosphoserine occurs at positions 479 and 496. Over residues 479-497 (SPCPSPGPGHALPPKPPSP) the composition is skewed to pro residues. Residues 523-539 (PEDKNHRKSRAAEEKEP) show a composition bias toward basic and acidic residues. Over residues 542 to 556 (PASPAPSPVPSPTPA) the composition is skewed to pro residues. 3 positions are modified to phosphoserine: Ser-544, Ser-548, and Ser-552. A Phosphothreonine modification is found at Thr-554. Positions 568-579 (PAETAVPAVPAA) are enriched in low complexity. Residues 599–740 (TTDREEATRL…AETKKQDAKE (142 aa)) are a coiled coil. Residues 600 to 740 (TDREEATRLL…AETKKQDAKE (141 aa)) are compositionally biased toward basic and acidic residues. Thr-818 is modified (phosphothreonine).

Belongs to the MAP7 family.

It is found in the cytoplasm. The protein resides in the cytoskeleton. It localises to the spindle. The protein localises to the microtubule organizing center. Its subcellular location is the centrosome. It is found in the midbody. Functionally, microtubule-stabilizing protein involved in the control of cell motility and neurite outgrowth. Facilitate microtubule stabilization through the maintenance of acetylated stable microtubules. The protein is MAP7 domain-containing protein 1 (Map7d1) of Mus musculus (Mouse).